Consider the following 138-residue polypeptide: Large ribosomal subunit protein uL16 (138 aa).

It belongs to the universal ribosomal protein uL16 family. As to quaternary structure, part of the 50S ribosomal subunit.

Its function is as follows. Binds 23S rRNA and is also seen to make contacts with the A and possibly P site tRNAs. In Mycoplasma genitalium (strain ATCC 33530 / DSM 19775 / NCTC 10195 / G37) (Mycoplasmoides genitalium), this protein is Large ribosomal subunit protein uL16.